The primary structure comprises 218 residues: Thiopurine S-methyltransferase (218 aa).

S-adenosyl-L-methionine-binding residues include W10, L45, E66, and R123.

The protein belongs to the class I-like SAM-binding methyltransferase superfamily. TPMT family.

It localises to the cytoplasm. The enzyme catalyses S-adenosyl-L-methionine + a thiopurine = S-adenosyl-L-homocysteine + a thiopurine S-methylether.. This chain is Thiopurine S-methyltransferase, found in Shewanella baltica (strain OS223).